The following is a 431-amino-acid chain: Adenylosuccinate synthetase (431 aa).

GTP contacts are provided by residues 13–19 (GDEGKGK) and 41–43 (GHT). Catalysis depends on aspartate 14, which acts as the Proton acceptor. Mg(2+)-binding residues include aspartate 14 and glycine 41. IMP-binding positions include 14–17 (DEGK), 39–42 (NAGH), threonine 130, arginine 144, glutamine 225, threonine 240, and arginine 304. Residue histidine 42 is the Proton donor of the active site. 300–306 (ATTGRKR) contacts substrate. GTP-binding positions include arginine 306, 332–334 (KLD), and 415–417 (STG).

This sequence belongs to the adenylosuccinate synthetase family. In terms of assembly, homodimer. Requires Mg(2+) as cofactor.

Its subcellular location is the cytoplasm. It catalyses the reaction IMP + L-aspartate + GTP = N(6)-(1,2-dicarboxyethyl)-AMP + GDP + phosphate + 2 H(+). It functions in the pathway purine metabolism; AMP biosynthesis via de novo pathway; AMP from IMP: step 1/2. Plays an important role in the de novo pathway of purine nucleotide biosynthesis. Catalyzes the first committed step in the biosynthesis of AMP from IMP. The protein is Adenylosuccinate synthetase of Shewanella halifaxensis (strain HAW-EB4).